The following is a 310-amino-acid chain: NADH-cytochrome b5 reductase 1 (310 aa).

Residues 32 to 52 (EWLPYAVALAAILSGGKVFSN) form a helical membrane-spanning segment. The 106-residue stretch at 61–166 (TEFQNFELKE…RGPKGAMVYT (106 aa)) folds into the FAD-binding FR-type domain. Residues 146-161 (AGLR…GPKG) and 172-209 (KIGM…QVDL) each bind FAD.

Belongs to the flavoprotein pyridine nucleotide cytochrome reductase family. As to quaternary structure, monomer. Component of the 2-(3-amino-3-carboxypropyl)histidine synthase complex composed of DPH1, DPH2, DPH3 and a NADH-dependent reductase, predominantly CBR1. Requires FAD as cofactor.

The protein resides in the mitochondrion outer membrane. It catalyses the reaction 2 Fe(III)-[cytochrome b5] + NADH = 2 Fe(II)-[cytochrome b5] + NAD(+) + H(+). The catalysed reaction is 2 Fe(3+)-[Dph3] + NADH = 2 Fe(2+)-[Dph3] + NAD(+) + H(+). The protein operates within protein modification; peptidyl-diphthamide biosynthesis. NADH-dependent reductase for DPH3 and cytochrome b5. Required for the first step of diphthamide biosynthesis, a post-translational modification of histidine which occurs in elongation factor 2. DPH1 and DPH2 transfer a 3-amino-3-carboxypropyl (ACP) group from S-adenosyl-L-methionine (SAM) to a histidine residue, the reaction is assisted by a reduction system comprising DPH3 and a NADH-dependent reductase, predominantly CBR1. By reducing DPH3, also involved in the formation of the tRNA wobble base modification mcm5s 2U (5-methoxycarbonylmethyl-2-thiouridine), mediated by the elongator complex. The cytochrome b5/NADH cytochrome b5 reductase electron transfer system supports the catalytic activity of several sterol biosynthetic enzymes. This chain is NADH-cytochrome b5 reductase 1 (CBR1), found in Ajellomyces capsulatus (strain NAm1 / WU24) (Darling's disease fungus).